Consider the following 482-residue polypeptide: ATP synthase subunit beta (482 aa).

ATP is bound at residue 162 to 169 (GGAGVGKT).

As to quaternary structure, F-type ATPases have 2 components, CF(1) - the catalytic core - and CF(0) - the membrane proton channel. CF(1) has five subunits: alpha(3), beta(3), gamma(1), delta(1), epsilon(1). CF(0) has four main subunits: a(1), b(1), b'(1) and c(9-12).

The protein localises to the cellular thylakoid membrane. It catalyses the reaction ATP + H2O + 4 H(+)(in) = ADP + phosphate + 5 H(+)(out). Its activity is regulated as follows. Inhibited by dicyclohexylcarbodiimide. In terms of biological role, produces ATP from ADP in the presence of a proton gradient across the membrane. The catalytic sites are hosted primarily by the beta subunits. Its function is as follows. The complex from the organism is particularly stable to disruption and remains functional after 6 hrs at 55 degrees Celsius. The polypeptide is ATP synthase subunit beta (Thermosynechococcus vestitus (strain NIES-2133 / IAM M-273 / BP-1)).